Reading from the N-terminus, the 449-residue chain is Keratin, type I cytoskeletal 27 (449 aa).

The tract at residues M1–N73 is head. The coil 1A stretch occupies residues E74–W109. Residues E74 to C389 form the IF rod domain. The tract at residues Y110–I131 is linker 1. Residues I132–L223 are coil 1B. The tract at residues Q224–L246 is linker 12. The coil 2 stretch occupies residues L247–D385. Residues E386–S449 form a tail region. The disordered stretch occupies residues L425 to S449. The segment covering H430–S449 has biased composition (basic and acidic residues).

This sequence belongs to the intermediate filament family. As to quaternary structure, heterotetramer of two type I and two type II keratins. Interacts with KRT6A to form filaments.

The protein resides in the cytoplasm. Essential for the proper assembly of type I and type II keratin protein complexes and formation of keratin intermediate filaments in the inner root sheath (irs). The sequence is that of Keratin, type I cytoskeletal 27 from Rattus norvegicus (Rat).